Here is a 1012-residue protein sequence, read N- to C-terminus: Structural polyprotein (1012 aa).

A divalent metal cation is bound at residue aspartate 30. The region spanning 513–755 is the Peptidase S50 domain; that stretch reads ADKGYEVVAN…AGRQYHLAMA (243 aa). Serine 652 serves as the catalytic Nucleophile. The active site involves lysine 692. The tract at residues 970–1012 is disordered; it reads MEMKHRNPRRAPPKPKPKPNAPSQRPPGRLGRWIRTVSDEDLE. Basic residues predominate over residues 975–986; that stretch reads RNPRRAPPKPKP. The interaction with VP1 protein stretch occupies residues 1003-1012; sequence IRTVSDEDLE.

Homotrimer. A central divalent metal stabilizes the VP2 trimer. Interacts with host ITGA4/ITGB1. In terms of assembly, homodimer. Interacts (via C-terminus) with VP1 in the cytoplasm. Interacts with VP2. Post-translationally, specific enzymatic cleavages yield mature proteins. The capsid assembly seems to be regulated by polyprotein processing. The protease VP4 cleaves itself off the polyprotein, thus releasing pre-VP2 and VP3 within the infected cell. During capsid assembly, the C-terminus of pre-VP2 is further processed by VP4, giving rise to VP2, the external capsid protein and three small peptides that all stay closely associated with the capsid.

The protein localises to the virion. Its subcellular location is the host cytoplasm. Functionally, capsid protein VP2 self assembles to form an icosahedral capsid with a T=13 symmetry, about 70 nm in diameter, and consisting of 260 VP2 trimers. The capsid encapsulates the genomic dsRNA. VP2 is also involved in attachment and entry into the host cell by interacting with host ITGA4/ITGB1. In terms of biological role, the precursor of VP2 plays an important role in capsid assembly. First, pre-VP2 and VP2 oligomers assemble to form a procapsid. Then, the pre-VP2 intermediates may be processed into VP2 proteins by proteolytic cleavage mediated by VP4 to obtain the mature virion. The final capsid is composed of pentamers and hexamers but VP2 has a natural tendency to assemble into all-pentameric structures. Therefore pre-VP2 may be required to allow formation of the hexameric structures. Protease VP4 is a serine protease that cleaves the polyprotein into its final products. Pre-VP2 is first partially cleaved, and may be completely processed by VP4 upon capsid maturation. Its function is as follows. Capsid protein VP3 plays a key role in virion assembly by providing a scaffold for the capsid made of VP2. May self-assemble to form a T=4-like icosahedral inner-capsid composed of at least 180 trimers. Plays a role in genomic RNA packaging by recruiting VP1 into the capsid and interacting with the dsRNA genome segments to form a ribonucleoprotein complex. Additionally, the interaction of the VP3 C-terminal tail with VP1 removes the inherent structural blockade of the polymerase active site. Thus, VP3 can also function as a transcriptional activator. Functionally, structural peptide 1 is a small peptide derived from pre-VP2 C-terminus. It destabilizes and perforates cell membranes, suggesting a role during entry. In terms of biological role, structural peptide 2 is a small peptide derived from pVP2 C-terminus. It is not essential for the virus viability, but viral growth is affected when missing. Structural peptide 3 is a small peptide derived from pVP2 C-terminus. It is not essential for the virus viability, but viral growth is affected when missing. Its function is as follows. Structural peptide 4 is a small peptide derived from pVP2 C-terminus. It is essential for the virus viability. This chain is Structural polyprotein, found in Avian infectious bursal disease virus (strain Australian 002-73) (IBDV).